Reading from the N-terminus, the 563-residue chain is Arginine--tRNA ligase (563 aa).

Positions 121–131 (PNIAKPFSIGH) match the 'HIGH' region motif.

Belongs to the class-I aminoacyl-tRNA synthetase family. As to quaternary structure, monomer.

It is found in the cytoplasm. It carries out the reaction tRNA(Arg) + L-arginine + ATP = L-arginyl-tRNA(Arg) + AMP + diphosphate. In Streptococcus pyogenes serotype M12 (strain MGAS2096), this protein is Arginine--tRNA ligase.